A 149-amino-acid polypeptide reads, in one-letter code: Large ribosomal subunit protein uL22 (149 aa).

The protein belongs to the universal ribosomal protein uL22 family. As to quaternary structure, part of the 50S ribosomal subunit.

Its function is as follows. This protein binds specifically to 23S rRNA. It makes multiple contacts with different domains of the 23S rRNA in the assembled 50S subunit and ribosome. In terms of biological role, the globular domain of the protein is located near the polypeptide exit tunnel on the outside of the subunit, while an extended beta-hairpin is found that lines the wall of the exit tunnel in the center of the 70S ribosome. The sequence is that of Large ribosomal subunit protein uL22 from Picrophilus torridus (strain ATCC 700027 / DSM 9790 / JCM 10055 / NBRC 100828 / KAW 2/3).